Consider the following 316-residue polypeptide: Transcription initiation factor IIB (316 aa).

The segment at 7–38 (FRLRCPVCGSTDIVFNEETGEYVCARCGTIVL) adopts a TFIIB-type zinc-finger fold. 4 residues coordinate Zn(2+): C11, C14, C30, and C33. The tract at residues 51-73 (FTPEERERRGRTGAPLSPTLHDH) is disordered. 2 repeat units span residues 124-207 (NELD…TKEL) and 218-299 (DHIP…EIMK).

The protein belongs to the TFIIB family.

Functionally, stabilizes TBP binding to an archaeal box-A promoter. Also responsible for recruiting RNA polymerase II to the pre-initiation complex (DNA-TBP-TFIIB). The polypeptide is Transcription initiation factor IIB (Ignicoccus hospitalis (strain KIN4/I / DSM 18386 / JCM 14125)).